A 197-amino-acid chain; its full sequence is dITP/XTP pyrophosphatase (197 aa).

Residue Ser10–Lys15 participates in substrate binding. Residues Glu41 and Asp70 each contribute to the Mg(2+) site. Asp70 (proton acceptor) is an active-site residue. Residues Ser71, Phe154 to Asp157, Lys177, and His182 to Arg183 each bind substrate.

This sequence belongs to the HAM1 NTPase family. Homodimer. The cofactor is Mg(2+).

It carries out the reaction XTP + H2O = XMP + diphosphate + H(+). The enzyme catalyses dITP + H2O = dIMP + diphosphate + H(+). The catalysed reaction is ITP + H2O = IMP + diphosphate + H(+). Functionally, pyrophosphatase that catalyzes the hydrolysis of nucleoside triphosphates to their monophosphate derivatives, with a high preference for the non-canonical purine nucleotides XTP (xanthosine triphosphate), dITP (deoxyinosine triphosphate) and ITP. Seems to function as a house-cleaning enzyme that removes non-canonical purine nucleotides from the nucleotide pool, thus preventing their incorporation into DNA/RNA and avoiding chromosomal lesions. The chain is dITP/XTP pyrophosphatase from Pseudomonas syringae pv. tomato (strain ATCC BAA-871 / DC3000).